Reading from the N-terminus, the 77-residue chain is MSLEDDVKAIIVDQLGVSPEDVKESSSFIEDLNADSLDLTELIMTLEEKFAFEISENDAEQLRTVGDVIKYIQERQN.

The Carrier domain occupies 1–76 (MSLEDDVKAI…DVIKYIQERQ (76 aa)). Ser-36 is modified (O-(pantetheine 4'-phosphoryl)serine).

It belongs to the acyl carrier protein (ACP) family. 4'-phosphopantetheine is transferred from CoA to a specific serine of apo-ACP by AcpS. This modification is essential for activity because fatty acids are bound in thioester linkage to the sulfhydryl of the prosthetic group.

It localises to the cytoplasm. Its pathway is lipid metabolism; fatty acid biosynthesis. In terms of biological role, carrier of the growing fatty acid chain in fatty acid biosynthesis. The sequence is that of Acyl carrier protein from Chlamydia muridarum (strain MoPn / Nigg).